The chain runs to 212 residues: Cytidylate kinase (212 aa).

7–15 serves as a coordination point for ATP; that stretch reads GPAASGKGT.

It belongs to the cytidylate kinase family. Type 1 subfamily.

The protein resides in the cytoplasm. The catalysed reaction is CMP + ATP = CDP + ADP. The enzyme catalyses dCMP + ATP = dCDP + ADP. This chain is Cytidylate kinase, found in Rhodopseudomonas palustris (strain ATCC BAA-98 / CGA009).